A 499-amino-acid chain; its full sequence is Potassium voltage-gated channel subfamily A member 2 (499 aa).

The segment at 1–26 (MTVATGDPVDEAAALPGHPQDTYDPE) is disordered. The interval 1–125 (MTVATGDPVD…YELGEEAMEM (125 aa)) is tetramerization domain. Over 1–160 (MTVATGDPVD…LLFEYPESSG (160 aa)) the chain is Cytoplasmic. The chain crosses the membrane as a helical span at residues 161–182 (PARIIAIVSVMVILISIVSFCL). At 183–221 (ETLPIFRDENEDMHGGGVTFHTYSNSTIGYQQSTSFTDP) the chain is on the extracellular side. Residue Asn207 is glycosylated (N-linked (GlcNAc...) asparagine). A helical transmembrane segment spans residues 222–243 (FFIVETLCIIWFSFEFLVRFFA). Cys244 carries the S-palmitoyl cysteine lipid modification. Over 244 to 254 (CPSKAGFFTNI) the chain is Cytoplasmic. Residues 255-275 (MNIIDIVAIIPYFITLGTELA) form a helical membrane-spanning segment. Topologically, residues 276 to 289 (EKPEDAQQGQQAMS) are extracellular. The helical; Voltage-sensor transmembrane segment at 290-310 (LAILRVIRLVRVFRIFKLSRH) threads the bilayer. At 311-325 (SKGLQILGQTLKASM) the chain is on the cytoplasmic side. Positions 312–325 (KGLQILGQTLKASM) are S4-S5 linker. The helical transmembrane segment at 326 to 347 (RELGLLIFFLFIGVILFSSAVY) threads the bilayer. Over 348–361 (FAEADERDSQFPSI) the chain is Extracellular. Residues 362 to 373 (PDAFWWAVVSMT) constitute an intramembrane region (helical). Residues 374–379 (TVGYGD) carry the Selectivity filter motif. Residues 374-381 (TVGYGDMV) lie within the membrane without spanning it. Over 382 to 388 (PTTIGGK) the chain is Extracellular. Residues 389–417 (IVGSLCAIAGVLTIALPVPVIVSNFNYFY) traverse the membrane as a helical segment. At 418–499 (HRETEGEEQA…VNITKMLTDV (82 aa)) the chain is on the cytoplasmic side. Tyr429 is modified (phosphotyrosine). Ser434, Ser440, Ser441, and Ser449 each carry phosphoserine. Tyr458 bears the Phosphotyrosine mark. Residue Ser468 is modified to Phosphoserine. Residues 497-499 (TDV) carry the PDZ-binding motif.

Belongs to the potassium channel family. A (Shaker) (TC 1.A.1.2) subfamily. Kv1.2/KCNA2 sub-subfamily. In terms of assembly, homotetramer and heterotetramer with other channel-forming alpha subunits, such as KCNA1, KCNA4, KCNA5, KCNA6 and KCNA7. Channel activity is regulated by interaction with beta subunits, including KCNAB1 and KCNAB2. Identified in a complex with KCNA1 and KCNAB2. Identified in a complex with KCNA5 and KCNAB1. Identified in a complex with KCNA4 and FYN. Interacts with PTK2B. Interacts (via C-terminus) with CTTN. Interacts with ADAM22. Interacts with CNTNAP2. Interacts (via C-terminus) with the PDZ domains of DLG1, DLG2 and DLG4. Interacts (via N-terminal cytoplasmic domain) with RHOA (GTP-bound form); this regulates channel activity by reducing location at the cell surface in response to CHRM1 activation. Interacts with DRD2. Interacts with SIGMAR1; cocaine consumption leads to increased interaction. Interacts with ADAM11. Interacts with LYNX1. In terms of processing, phosphorylated on tyrosine residues; phosphorylation increases in response to ischemia. Phosphorylated on tyrosine residues by activated PTK2B/PYK2. Phosphorylation on tyrosine residues suppresses ion channel activity. Phosphorylated on tyrosine residues in response to CHRM1 activation; this abolishes interaction with CTTN. This is probably due to endocytosis of the phosphorylated channel subunits. Phosphorylated on serine residues in response to increased cAMP levels; phosphorylation is apparently not catalyzed by PKA. Post-translationally, N-glycosylated, with complex, sialylated N-glycans. As to expression, detected in brain. Detected in cerebellum. Detected in mitral cells in the olfactory bulb. Detected in cochlea. Detected in cerebellum, particularly in the basket cell axon plexus and in the terminal regions around Purkinje cells (at protein level). Detected in juxtaparanodal regions in sciatic nerve. Detected in Schwann cells from sciatic nerve. Detected in dopamine neurons in substantia nigra. Detected in large myelinated fibers in juxtaparanodes in the CA3 and CA1 areas of the hippocampus. Detected in brain, in punctae on fiber tracts in brain stem and spinal cord, and on axons in the juxtaparanodal regions of the node of Ranvier (at protein level). Detected in dopamine neurons in the midbrain.

Its subcellular location is the cell membrane. The protein resides in the membrane. It is found in the cell projection. The protein localises to the axon. It localises to the synapse. Its subcellular location is the endoplasmic reticulum membrane. The protein resides in the lamellipodium membrane. It is found in the synaptosome. The protein localises to the presynaptic cell membrane. It localises to the dendrite. Its subcellular location is the perikaryon. The protein resides in the cell junction. It is found in the paranodal septate junction. The catalysed reaction is K(+)(in) = K(+)(out). With respect to regulation, inhibited by 4-aminopyridine (4-AP), dendrotoxin (DTX) and charybdotoxin (CTX), but not by tetraethylammonium (TEA). Inhibited by tityustoxin-K alpha (TsTX-Kalpha), a toxin that is highly specific for KCNA2. Inhibited by maurotoxin. Inhibited by kappaM conotoxins kappaM-RIIIJ and kappaM-RIIIK. In terms of biological role, voltage-gated potassium channel that mediates transmembrane potassium transport in excitable membranes, primarily in the brain and the central nervous system, but also in the cardiovascular system. Prevents aberrant action potential firing and regulates neuronal output. Forms tetrameric potassium-selective channels through which potassium ions pass in accordance with their electrochemical gradient. The channel alternates between opened and closed conformations in response to the voltage difference across the membrane. Can form functional homotetrameric channels and heterotetrameric channels that contain variable proportions of KCNA1, KCNA2, KCNA4, KCNA5, KCNA6, KCNA7, and possibly other family members as well; channel properties depend on the type of alpha subunits that are part of the channel. Channel properties are modulated by cytoplasmic beta subunits that regulate the subcellular location of the alpha subunits and promote rapid inactivation of delayed rectifier potassium channels. In vivo, membranes probably contain a mixture of heteromeric potassium channel complexes, making it difficult to assign currents observed in intact tissues to any particular potassium channel family member. Homotetrameric KCNA2 forms a delayed-rectifier potassium channel that opens in response to membrane depolarization, followed by slow spontaneous channel closure. In contrast, a heteromultimer formed by KCNA2 and KCNA4 shows rapid inactivation. Contributes to the regulation of action potentials in neurons. KCNA2-containing channels play a presynaptic role and prevent hyperexcitability and aberrant action potential firing. Response to toxins that are selective for KCNA1, respectively for KCNA2, suggests that heteromeric potassium channels composed of both KCNA1 and KCNA2 play a role in pacemaking and regulate the output of deep cerebellar nuclear neurons. Response to toxins that are selective for KCNA2-containing potassium channels suggests that in Purkinje cells, dendritic subthreshold KCNA2-containing potassium channels prevent random spontaneous calcium spikes, suppressing dendritic hyperexcitability without hindering the generation of somatic action potentials, and thereby play an important role in motor coordination. KCNA2-containing channels play a role in GABAergic transmission from basket cells to Purkinje cells in the cerebellum, and thereby play an import role in motor coordination. Plays a role in the induction of long-term potentiation of neuron excitability in the CA3 layer of the hippocampus. May function as down-stream effector for G protein-coupled receptors and inhibit GABAergic inputs to basolateral amygdala neurons. May contribute to the regulation of neurotransmitter release, such as gamma-aminobutyric acid (GABA). Contributes to the regulation of the axonal release of the neurotransmitter dopamine. Reduced KCNA2 expression plays a role in the perception of neuropathic pain after peripheral nerve injury, but not acute pain. Plays a role in the regulation of the time spent in non-rapid eye movement (NREM) sleep. The sequence is that of Potassium voltage-gated channel subfamily A member 2 (Kcna2) from Mus musculus (Mouse).